Consider the following 661-residue polypeptide: Transmembrane and coiled-coil domain-containing protein STS1 (661 aa).

2 disordered regions span residues 34-71 (AHHHHDDDDEEQGRTSTSSGGGGGSSSSSSNSGAGADA) and 154-185 (VGNTIKGGDQDALPSSSGTDKSPGESSHDDQL). The span at 59-69 (SSSSSNSGAGA) shows a compositional bias: low complexity. Over residues 175–184 (SPGESSHDDQ) the composition is skewed to basic and acidic residues. The next 4 helical transmembrane spans lie at 306–326 (ALLAITGGLAAPAIAAGFGAL), 333–353 (LVPVIGASGFAAMATAAGSVA), 355–375 (SVAVAASFGAAGAGLTGSKMA), and 466–486 (LSGLLAAFAWPATLLAATDFI).

The protein belongs to the TMCO4 family. As to quaternary structure, interacts with PKS10/PKS2 and 4CLL9/ACOS12.

It localises to the endoplasmic reticulum membrane. In terms of biological role, involved in anther lipids biosynthesis and is required for tapetum degradation and pollen wall formation. Required for the formation of Ubisch bodies and microspores. Possesses lipase activity in vitro toward two synthetic substrates, p-nitrophenyl acetate (pNPA) and p-nitrophenyl butyrate (pNPB). This chain is Transmembrane and coiled-coil domain-containing protein STS1, found in Oryza sativa subsp. japonica (Rice).